The following is a 381-amino-acid chain: Alkanesulfonate monooxygenase (381 aa).

This sequence belongs to the SsuD family. Homotetramer.

The catalysed reaction is an alkanesulfonate + FMNH2 + O2 = an aldehyde + FMN + sulfite + H2O + 2 H(+). Functionally, catalyzes the desulfonation of aliphatic sulfonates. In Escherichia coli O81 (strain ED1a), this protein is Alkanesulfonate monooxygenase.